Here is a 96-residue protein sequence, read N- to C-terminus: Aspartyl/glutamyl-tRNA(Asn/Gln) amidotransferase subunit C (96 aa).

Belongs to the GatC family. As to quaternary structure, heterotrimer of A, B and C subunits.

It carries out the reaction L-glutamyl-tRNA(Gln) + L-glutamine + ATP + H2O = L-glutaminyl-tRNA(Gln) + L-glutamate + ADP + phosphate + H(+). The catalysed reaction is L-aspartyl-tRNA(Asn) + L-glutamine + ATP + H2O = L-asparaginyl-tRNA(Asn) + L-glutamate + ADP + phosphate + 2 H(+). In terms of biological role, allows the formation of correctly charged Asn-tRNA(Asn) or Gln-tRNA(Gln) through the transamidation of misacylated Asp-tRNA(Asn) or Glu-tRNA(Gln) in organisms which lack either or both of asparaginyl-tRNA or glutaminyl-tRNA synthetases. The reaction takes place in the presence of glutamine and ATP through an activated phospho-Asp-tRNA(Asn) or phospho-Glu-tRNA(Gln). The sequence is that of Aspartyl/glutamyl-tRNA(Asn/Gln) amidotransferase subunit C from Symbiobacterium thermophilum (strain DSM 24528 / JCM 14929 / IAM 14863 / T).